The chain runs to 478 residues: Flotillin-like protein 1 (478 aa).

Cys-35 is lipidated: S-palmitoyl cysteine. Residues 235-277 adopt a coiled-coil conformation; sequence ENQREAEVAEANSELAKKKAAWTMAAQVAELEAAKAVALREAE.

The protein belongs to the band 7/mec-2 family. Flotillin subfamily. In terms of processing, may be palmitoylated. Expressed in all plant organs. Primarily expressed in vascular tissues. No change in spatial expression in root upon inoculation. Expression limited to the nodule vascular tissue.

The protein resides in the cell membrane. It localises to the membrane. Its subcellular location is the caveola. Its function is as follows. May act as a scaffolding protein within caveolar membranes, functionally participating in formation of caveolae or caveolae-like vesicles. May be involved in nodule formation. This is Flotillin-like protein 1 (FLOT1) from Medicago truncatula (Barrel medic).